Here is a 262-residue protein sequence, read N- to C-terminus: Spindlin-1 (262 aa).

Residues 1–49 (MKTPFGKTPGQRSRADAGHAGVSANMMKKRTSHKKHRTSVGPSKPVSQP) are disordered. Residues Lys-7 and Lys-28 each participate in a glycyl lysine isopeptide (Lys-Gly) (interchain with G-Cter in SUMO2) cross-link. The segment covering 27–38 (MKKRTSHKKHRT) has biased composition (basic residues). At Lys-44 the chain carries N6-acetyllysine; alternate. Lys-44 participates in a covalent cross-link: Glycyl lysine isopeptide (Lys-Gly) (interchain with G-Cter in SUMO2); alternate. A tudor-like domain 1 region spans residues 53–116 (IVGCRIQHGW…RVSALEVLPD (64 aa)). The tract at residues 93–98 (GFDCVY) is histone H3K4me3 and H3R8me2a binding. Ser-109 and Ser-124 each carry phosphoserine; by AURKA. Residues 132–193 (MIGKAVEHMF…DYKEGDLRIM (62 aa)) form a tudor-like domain 2 region. A region of interest (histone H3K4me3 and H3R8me2a binding) is located at residue Glu-142. Ser-199 bears the Phosphoserine mark. The tract at residues 213–262 (LVGKQVEYAKEDGSKRTGMVIHQVEAKPSVYFIKFDDDFHIYVYDLVKTS) is tudor-like domain 3. Residues 250–252 (DFH) are histone H3K4me3 and H3R8me2a binding.

This sequence belongs to the SPIN/STSY family. In terms of assembly, homodimer; may form higher-order oligomers. Interacts with TCF7L2/TCF4; the interaction is direct. Interacts with HABP4 and SERBP1. Interacts with SPINDOC; SPINDOC stabilizes SPIN1 and enhances its association with bivalent H3K4me3K9me3 mark. Interacts with SPOCD1; promoting recruitment of PIWIL4 and SPOCD1 to transposons. Phosphorylated during oocyte meiotic maturation.

The protein localises to the nucleus. The protein resides in the nucleolus. Functionally, chromatin reader that specifically recognizes and binds histone H3 both trimethylated at 'Lys-4' and 'Lys-9' (H3K4me3K9me3) and is involved in piRNA-mediated retrotransposon silencing during spermatogenesis. Plays a key role in the initiation of the PIWIL4-piRNA pathway, a pathway that directs transposon DNA methylation and silencing in the male embryonic germ cells, by promoting recruitment of DNA methylation machinery to transposons: binds young, but not old, LINE1 transposons, which are specifically marked with H3K4me3K9me3, and promotes the recruitment of PIWIL4 and SPOCD1 to transposons, leading to piRNA-directed DNA methylation. Also recognizes and binds histone H3 both trimethylated at 'Lys-4' and asymmetrically dimethylated at 'Arg-8' (H3K4me3 and H3R8me2a) and acts as an activator of Wnt signaling pathway downstream of PRMT2. Overexpression induces metaphase arrest and chromosomal instability. Overexpression induces metaphase arrest and chromosomal instability. Localizes to active rDNA loci and promotes the expression of rRNA genes. May play a role in cell-cycle regulation during the transition from gamete to embryo. Involved in oocyte meiotic resumption, a process that takes place before ovulation to resume meiosis of oocytes blocked in prophase I: may act by regulating maternal transcripts to control meiotic resumption. This is Spindlin-1 (Spin1) from Rattus norvegicus (Rat).